We begin with the raw amino-acid sequence, 123 residues long: Small ribosomal subunit protein uS17 (123 aa).

This sequence belongs to the universal ribosomal protein uS17 family. Part of the 30S ribosomal subunit.

In terms of biological role, one of the primary rRNA binding proteins, it binds specifically to the 5'-end of 16S ribosomal RNA. The chain is Small ribosomal subunit protein uS17 from Pyrobaculum aerophilum (strain ATCC 51768 / DSM 7523 / JCM 9630 / CIP 104966 / NBRC 100827 / IM2).